The chain runs to 714 residues: Delta-like protein 1 (714 aa).

Positions 1–17 (MGRRSALALAVVSALLC) are cleaved as a signal peptide. Topologically, residues 18–537 (QVWSSGVFEL…VAAQGGSFPW (520 aa)) are extracellular. Residues 176-220 (FVCDEHYYGEGCSVFCRPRDDAFGHFTCGERGEKMCDPGWKGQYC) form the DSL domain. Intrachain disulfides connect Cys178-Cys187, Cys191-Cys203, Cys211-Cys220, Cys225-Cys236, Cys229-Cys242, Cys244-Cys253, Cys256-Cys267, Cys262-Cys273, Cys275-Cys284, Cys291-Cys303, Cys297-Cys313, Cys315-Cys324, Cys331-Cys342, Cys336-Cys351, Cys353-Cys362, Cys369-Cys380, Cys374-Cys390, Cys392-Cys401, Cys408-Cys419, Cys413-Cys428, Cys430-Cys439, Cys446-Cys457, Cys451-Cys466, Cys468-Cys477, Cys484-Cys495, Cys489-Cys504, and Cys506-Cys515. EGF-like domains are found at residues 225–253 (CLPG…GRYC), 256–284 (CIRY…GLFC), and 291–324 (CTHH…GANC). The region spanning 331–362 (CAPSPCRNGGSCTDLEDSYSCTCPPGFYGKVC) is the EGF-like 4; calcium-binding domain. 2 consecutive EGF-like domains span residues 369–401 (CADG…GFNC) and 408–439 (CSSS…GRYC). Residues 446-477 (CASSPCANGGTCRDSVNDFSCTCPPGYTGRNC) form the EGF-like 7; calcium-binding domain. Asn476 carries N-linked (GlcNAc...) asparagine glycosylation. Positions 484–515 (CEHAPCHNGATCHQRGQRYMCECAQGYGGANC) constitute an EGF-like 8 domain. The chain crosses the membrane as a helical span at residues 538–560 (VAVCAGVVLVLLLLLGCAAVVVC). At 561 to 714 (VRLKLQKHQP…KDECVIATEV (154 aa)) the chain is on the cytoplasmic side. Lys605 is covalently cross-linked (Glycyl lysine isopeptide (Lys-Gly) (interchain with G-Cter in ubiquitin)). Thr630 is subject to Phosphothreonine. A compositionally biased stretch (basic and acidic residues) spans 644 to 656 (ATVRDAHSKRDTK). Positions 644 to 690 (ATVRDAHSKRDTKCQSQGSVGEEKSTSTLRGGEVPDRKRPESVYSTS) are disordered. Residue Ser685 is modified to Phosphoserine; by PKB. At Ser688 the chain carries Phosphoserine. The interaction with MAGI1 stretch occupies residues 711 to 714 (ATEV).

In terms of assembly, homodimer. Interacts with TJP1. Interacts with MAGI1 (via PDZ domain); forms a complex with CTNNB1 and CDH2 and promotes recruitment to the adherens junction and stabilization on the cell surface. Interacts with PSEN1; undergoes a presenilin-dependent gamma-secretase cleavage that releases a Dll1-intracellular form. Interacts with MFAP5. Interacts with MIB1. Interacts with NEURL1B; leads to ubiquitination. Interacts with NEURL1. Interacts with SYNJ2BP; enhances DLL1 protein stability, and promotes Notch signaling in endothelial cells. Interacts with MAGI1, MAGI2, MAGI3 and MPDZ. Interacts (via ubiquitin) with EPN1 (via IUM domain); binding with NOTCH1 attached to neighboring cell, promotes ligand ubiquitination and EPN1 interaction, leading to NECD transendocytosis and Notch signaling. Interacts with NOTCH1. Post-translationally, ubiquitinated by MIB (MIB1 or MIB2), leading to its endocytosis and subsequent degradation. Ubiquitinated; promotes recycling back to the plasma membrane and confers a strong affinity for NOTCH1. Mono- and multi-ubiquitinated. Multi-ubiquitination of Lys-605 by MIB1 promotes both cis and trans-interaction with NOTCH1, as well as activation of Notch signaling. Ubiquitinated by NEURL1B. Phosphorylated in a membrane association-dependent manner. Phosphorylation at Ser-688 requires the presence of Ser-685, whereas phosphorylation at Thr-630 and Ser-685 occur independently of the other sites. Phosphorylation is required for full ligand activity in vitro and affects surface presentation, ectodomain shedding, and endocytosis. In terms of processing, O-fucosylated. Can be elongated to a disaccharide by MFNG.

It is found in the apical cell membrane. The protein localises to the cell junction. The protein resides in the adherens junction. Its subcellular location is the membrane raft. Its function is as follows. Transmembrane ligand protein of NOTCH1, NOTCH2 and NOTCH3 receptors that binds the extracellular domain (ECD) of Notch receptor in a cis and trans fashion manner. Following transinteraction, ligand cells produce mechanical force that depends of a clathrin-mediated endocytosis, requiring ligand ubiquitination, EPN1 interaction, and actin polymerisation; these events promote Notch receptor extracellular domain (NECD) transendocytosis and triggers Notch signaling through induction of cleavage, hyperphosphorylation, and nuclear accumulation of the intracellular domain of Notch receptors (NICD). Is required for embryonic development and maintenance of adult stem cells in many different tissues and immune systeme; the DLL1-induced Notch signaling is mediated through an intercellular communication that regulates cell lineage, cell specification, cell patterning and morphogenesis through effects on differentiation and proliferation. Plays a role in brain development at different level, namely by regulating neuronal differentiation of neural precursor cells via cell-cell interaction, most likely through the lateral inhibitory system in an endogenous level dependent-manner. During neocortex development, Dll1-Notch signaling transmission is mediated by dynamic interactions between intermediate neurogenic progenitors and radial glia; the cell-cell interactions are mediated via dynamic and transient elongation processes, likely to reactivate/maintain Notch activity in neighboring progenitors, and coordinate progenitor cell division and differentiation across radial and zonal boundaries. During cerebellar development, regulates Bergmann glial monolayer formation and its morphological maturation through a Notch signaling pathway. At the retina and spinal cord level, regulates neurogenesis by preventing the premature differentiation of neural progenitors and also by maintaining progenitors in spinal cord through Notch signaling pathway. Also controls neurogenesis of the neural tube in a progenitor domain-specific fashion along the dorsoventral axis. Maintains quiescence of neural stem cells and plays a role as a fate determinant that segregates asymmetrically to one daughter cell during neural stem cells mitosis, resulting in neuronal differentiation in Dll1-inheriting cell. Plays a role in immune systeme development, namely the development of all T-cells and marginal zone (MZ) B cells. Blocks the differentiation of progenitor cells into the B-cell lineage while promoting the emergence of a population of cells with the characteristics of a T-cell/NK-cell precursor. Also plays a role during muscle development. During early development, inhibits myoblasts differentiation from the medial dermomyotomal lip and later regulates progenitor cell differentiation. Directly modulates cell adhesion and basal lamina formation in satellite cells through Notch signaling. Maintains myogenic progenitors pool by suppressing differentiation through down-regulation of MYOD1 and is required for satellite cell homing and PAX7 expression. During craniofacial and trunk myogenesis suppresses differentiation of cranial mesoderm-derived and somite-derived muscle via MYOD1 regulation but in cranial mesoderm-derived progenitors, is neither required for satellite cell homing nor for PAX7 expression. Also plays a role during pancreatic cell development. During type B pancreatic cell development, may be involved in the initiation of proximodistal patterning in the early pancreatic epithelium. Stimulates multipotent pancreatic progenitor cells proliferation and pancreatic growth by maintaining HES1 expression and PTF1A protein levels. During fetal stages of development, is required to maintain arterial identity and the responsiveness of arterial endothelial cells for VEGFA through regulation of KDR activation and NRP1 expression. Controls sprouting angiogenesis and subsequent vertical branch formation through regulation on tip cell differentiation. Negatively regulates goblet cell differentiation in intestine and controls secretory fat commitment through lateral inhibition in small intestine. Plays a role during inner ear development; negatively regulates auditory hair cell differentiation. Plays a role during nephron development through Notch signaling pathway. Regulates growth, blood pressure and energy homeostasis. The sequence is that of Delta-like protein 1 (Dll1) from Rattus norvegicus (Rat).